Reading from the N-terminus, the 114-residue chain is U10-agatoxin-Ao1a (114 aa).

The first 15 residues, 1-15 (MCVATCLCTFAYVLA), serve as a signal peptide directing secretion. The propeptide occupies 16–32 (KSDEGENLISKVEETQR). Cystine bridges form between Cys34/Cys53, Cys41/Cys59, Cys50/Cys86, Cys52/Cys76, and Cys61/Cys74. Positions 95 to 114 (GSQNPSLCKDPNPRRRRHGK) are disordered.

This sequence belongs to the neurotoxin 04 (omega-agtx) family. 03 (type II/III omega-agtx) subfamily. As to expression, expressed by the venom gland.

It localises to the secreted. Functionally, inhibits voltage-gated calcium channels (Cav). The protein is U10-agatoxin-Ao1a of Agelena orientalis (Funnel-web spider).